Consider the following 363-residue polypeptide: Ribosome-binding ATPase YchF (363 aa).

Residues 3-256 (FKCGIVGLPN…LDDDEKIEFL (254 aa)) enclose the OBG-type G domain. Position 12–17 (12–17 (NVGKST)) interacts with ATP. 2 residues coordinate Mg(2+): serine 16 and threonine 36. In terms of domain architecture, TGS spans 278–361 (NLQTYFTAGV…QDGDVMHFRF (84 aa)).

The protein belongs to the TRAFAC class OBG-HflX-like GTPase superfamily. OBG GTPase family. YchF/OLA1 subfamily. Mg(2+) serves as cofactor.

Functionally, ATPase that binds to both the 70S ribosome and the 50S ribosomal subunit in a nucleotide-independent manner. In Pasteurella multocida (strain Pm70), this protein is Ribosome-binding ATPase YchF.